Reading from the N-terminus, the 758-residue chain is Probable adenosylcobalamin-dependent ribonucleoside-triphosphate reductase (758 aa).

Cysteine 194 and cysteine 459 are disulfide-bonded. The segment at 233-256 is disordered; the sequence is IIIKGQLPPPPPQQQPQQQQQQHG. Active-site residues include cysteine 448 and glutamate 450.

The protein belongs to the class II ribonucleoside-triphosphate reductase family. As to quaternary structure, monomer. It depends on adenosylcob(III)alamin as a cofactor.

The catalysed reaction is a 2'-deoxyribonucleoside 5'-triphosphate + [thioredoxin]-disulfide + H2O = a ribonucleoside 5'-triphosphate + [thioredoxin]-dithiol. This is Probable adenosylcobalamin-dependent ribonucleoside-triphosphate reductase (rtpR) from Dictyostelium discoideum (Social amoeba).